The primary structure comprises 784 residues: LPS-assembly protein LptD (784 aa).

The signal sequence occupies residues Met-1–Ala-24. Disulfide bonds link Cys-31-Cys-724 and Cys-173-Cys-725.

The protein belongs to the LptD family. Component of the lipopolysaccharide transport and assembly complex. Interacts with LptE and LptA. In terms of processing, contains two intramolecular disulfide bonds.

It is found in the cell outer membrane. Functionally, together with LptE, is involved in the assembly of lipopolysaccharide (LPS) at the surface of the outer membrane. The sequence is that of LPS-assembly protein LptD from Escherichia coli O1:K1 / APEC.